A 734-amino-acid polypeptide reads, in one-letter code: Cell surface glycoprotein gp138B (734 aa).

An N-terminal signal peptide occupies residues M1–S20. N58, N89, N124, N198, N224, N392, N420, N435, N482, N498, N523, N596, N605, N614, N621, and N630 each carry an N-linked (GlcNAc...) asparagine glycan. Residues P504–F592 enclose the IPT/TIG domain. The interval G678 to S712 is disordered. Positions T680 to S712 are enriched in low complexity. Tandem repeats lie at residues P683 to T686, P687 to T690, P691 to T694, and P695 to T698. Residues P683 to T698 are 4 X 4 AA tandem repeats of P-S-T-T. The GPI-like-anchor amidated glycine moiety is linked to residue G708. Positions D709–I734 are cleaved as a propeptide — removed in mature form.

In terms of processing, the sugar chains may play important roles in cell fusion. The GPI-like-anchor contains a phosphoceramide group, rather than a phosphatidyl group.

The protein localises to the cell membrane. Functionally, involved in the sexual cell fusion of D.discoideum. This Dictyostelium discoideum (Social amoeba) protein is Cell surface glycoprotein gp138B (GP138B).